We begin with the raw amino-acid sequence, 180 residues long: MKTAARIVAFTALTGFALGMPTVAMAEMETTEKSAVVSQAATDSAMTIVEVAAGNETFSTLVAAVKAADLVEALSAEGPFTVFAPTNDAFAALPAGTVESLLLPENKDKLVKILTYHVVPGKITAAQVQSGEVASLAGEALTFKVKDGKVKVNKATVISADVDASNGVIHVIDQVILPPM.

An N-terminal signal peptide occupies residues 1–26 (MKTAARIVAFTALTGFALGMPTVAMA). The 132-residue stretch at 45–176 (AMTIVEVAAG…GVIHVIDQVI (132 aa)) folds into the FAS1 domain.

The sequence is that of Protein sll1483 from Synechocystis sp. (strain ATCC 27184 / PCC 6803 / Kazusa).